The chain runs to 310 residues: Methionyl-tRNA formyltransferase (310 aa).

106-109 (SLLP) provides a ligand contact to (6S)-5,6,7,8-tetrahydrofolate.

This sequence belongs to the Fmt family.

It carries out the reaction L-methionyl-tRNA(fMet) + (6R)-10-formyltetrahydrofolate = N-formyl-L-methionyl-tRNA(fMet) + (6S)-5,6,7,8-tetrahydrofolate + H(+). Functionally, attaches a formyl group to the free amino group of methionyl-tRNA(fMet). The formyl group appears to play a dual role in the initiator identity of N-formylmethionyl-tRNA by promoting its recognition by IF2 and preventing the misappropriation of this tRNA by the elongation apparatus. This is Methionyl-tRNA formyltransferase from Fervidobacterium nodosum (strain ATCC 35602 / DSM 5306 / Rt17-B1).